We begin with the raw amino-acid sequence, 852 residues long: Lon protease homolog 2, peroxisomal (852 aa).

Serine 2 bears the N-acetylserine mark. One can recognise a Lon N-terminal domain in the interval 13-222 (LPLLLTHESV…MTIPLLVRQI (210 aa)). 375-382 (GPPGVGKT) lines the ATP pocket. One can recognise a Lon proteolytic domain in the interval 651–837 (LSQPGVAIGL…DEVLNAAFDG (187 aa)). Catalysis depends on residues serine 743 and lysine 786. The Microbody targeting signal motif lies at 850-852 (SKL).

It belongs to the peptidase S16 family. Interacts with PEX5. Interacts with TYSND1. May interact with enzymes involved in beta-oxidation of fatty acids, including ACOX1/AOX.

The protein localises to the peroxisome matrix. The catalysed reaction is Hydrolysis of proteins in presence of ATP.. Its function is as follows. ATP-dependent serine protease that mediates the selective degradation of misfolded and unassembled polypeptides in the peroxisomal matrix. Necessary for type 2 peroxisome targeting signal (PTS2)-containing protein processing and facilitates peroxisome matrix protein import. May indirectly regulate peroxisomal fatty acid beta-oxidation through degradation of the self-processed forms of TYSND1. The chain is Lon protease homolog 2, peroxisomal (Lonp2) from Mus musculus (Mouse).